A 256-amino-acid chain; its full sequence is Acetyl-coenzyme A carboxylase carboxyl transferase subunit alpha (256 aa).

The CoA carboxyltransferase C-terminal domain occupies 1–236; the sequence is MTKITRIIKE…KEEIAAELDS (236 aa).

This sequence belongs to the AccA family. In terms of assembly, acetyl-CoA carboxylase is a heterohexamer composed of biotin carboxyl carrier protein (AccB), biotin carboxylase (AccC) and two subunits each of ACCase subunit alpha (AccA) and ACCase subunit beta (AccD).

The protein localises to the cytoplasm. It catalyses the reaction N(6)-carboxybiotinyl-L-lysyl-[protein] + acetyl-CoA = N(6)-biotinyl-L-lysyl-[protein] + malonyl-CoA. Its pathway is lipid metabolism; malonyl-CoA biosynthesis; malonyl-CoA from acetyl-CoA: step 1/1. Component of the acetyl coenzyme A carboxylase (ACC) complex. First, biotin carboxylase catalyzes the carboxylation of biotin on its carrier protein (BCCP) and then the CO(2) group is transferred by the carboxyltransferase to acetyl-CoA to form malonyl-CoA. The polypeptide is Acetyl-coenzyme A carboxylase carboxyl transferase subunit alpha (Streptococcus sanguinis (strain SK36)).